The following is a 467-amino-acid chain: 2-succinylbenzoate--CoA ligase (467 aa).

This sequence belongs to the ATP-dependent AMP-binding enzyme family. MenE subfamily.

It carries out the reaction 2-succinylbenzoate + ATP + CoA = 2-succinylbenzoyl-CoA + AMP + diphosphate. It participates in quinol/quinone metabolism; 1,4-dihydroxy-2-naphthoate biosynthesis; 1,4-dihydroxy-2-naphthoate from chorismate: step 5/7. Its pathway is quinol/quinone metabolism; menaquinone biosynthesis. In terms of biological role, converts 2-succinylbenzoate (OSB) to 2-succinylbenzoyl-CoA (OSB-CoA). In Listeria innocua serovar 6a (strain ATCC BAA-680 / CLIP 11262), this protein is 2-succinylbenzoate--CoA ligase.